Reading from the N-terminus, the 403-residue chain is Phosphoglycerate kinase (403 aa).

Substrate-binding positions include 24 to 26 (DLN), Arg-39, 62 to 65 (HLGR), Arg-121, and Arg-161. Residues Lys-211, Gly-299, Glu-330, and 359 to 362 (GGDS) contribute to the ATP site.

The protein belongs to the phosphoglycerate kinase family. Monomer.

It localises to the cytoplasm. The catalysed reaction is (2R)-3-phosphoglycerate + ATP = (2R)-3-phospho-glyceroyl phosphate + ADP. It participates in carbohydrate degradation; glycolysis; pyruvate from D-glyceraldehyde 3-phosphate: step 2/5. This is Phosphoglycerate kinase from Rhodococcus opacus (strain B4).